Consider the following 375-residue polypeptide: Succinyl-diaminopimelate desuccinylase (375 aa).

Residue His-66 coordinates Zn(2+). Asp-68 is a catalytic residue. Residue Asp-99 participates in Zn(2+) binding. Glu-133 serves as the catalytic Proton acceptor. Zn(2+)-binding residues include Glu-134, Glu-162, and His-348.

The protein belongs to the peptidase M20A family. DapE subfamily. In terms of assembly, homodimer. The cofactor is Zn(2+). Co(2+) serves as cofactor.

It carries out the reaction N-succinyl-(2S,6S)-2,6-diaminopimelate + H2O = (2S,6S)-2,6-diaminopimelate + succinate. It participates in amino-acid biosynthesis; L-lysine biosynthesis via DAP pathway; LL-2,6-diaminopimelate from (S)-tetrahydrodipicolinate (succinylase route): step 3/3. Its function is as follows. Catalyzes the hydrolysis of N-succinyl-L,L-diaminopimelic acid (SDAP), forming succinate and LL-2,6-diaminopimelate (DAP), an intermediate involved in the bacterial biosynthesis of lysine and meso-diaminopimelic acid, an essential component of bacterial cell walls. This Shigella sonnei (strain Ss046) protein is Succinyl-diaminopimelate desuccinylase.